We begin with the raw amino-acid sequence, 790 residues long: DNA ligase 1 (790 aa).

Residues 1-64 (MLAIRSSNYL…AFDALMSNAR (64 aa)) constitute a mitochondrion transit peptide. Residues 64 to 142 (RAAAKKKTPQ…TGAKKAKTLS (79 aa)) form a disordered region. The Nuclear localization signal 1 motif lies at 68–75 (KKKTPQTT). Polar residues predominate over residues 116–128 (DSANPRSDTSSIA). The interval 337–346 (KLRLGFSGQT) is interaction with target DNA. Glu-442 contributes to the ATP binding site. Catalysis depends on Lys-444, which acts as the N6-AMP-lysine intermediate. ATP is bound by residues Arg-449 and Arg-465. Glu-497 is a Mg(2+) binding site. A Nuclear localization signal 2 motif is present at residues 505 to 512 (KKKILPFQ). The interval 518-520 (ARK) is interaction with target DNA. A Mg(2+)-binding site is contributed by Glu-596. 3 residues coordinate ATP: Lys-601, Arg-614, and Lys-620. Residues 757-790 (DKKPEEATSSEQIADLYQAQKHNHPSNEVKGDDD) form a disordered region. Residues 781-790 (PSNEVKGDDD) are compositionally biased toward basic and acidic residues.

The protein belongs to the ATP-dependent DNA ligase family. Requires Mg(2+) as cofactor. Expressed in all vegetative and reproductive tissues.

The protein resides in the mitochondrion. It is found in the nucleus. It catalyses the reaction ATP + (deoxyribonucleotide)n-3'-hydroxyl + 5'-phospho-(deoxyribonucleotide)m = (deoxyribonucleotide)n+m + AMP + diphosphate.. Functionally, essential protein. DNA ligase that seals nicks in double-stranded DNA during DNA replication, DNA recombination and DNA repair. Involved in repair of both single strand breaks (SSBs) and double strand breaks (DSBs). Required in the endosperm for embryogenesis, probably to repair DNA-breaks generated by DME. In Arabidopsis thaliana (Mouse-ear cress), this protein is DNA ligase 1 (LIG1).